The following is a 164-amino-acid chain: Ubiquitin-fold modifier-conjugating enzyme 1 (164 aa).

Residue cysteine 116 is the Glycyl thioester intermediate of the active site.

Belongs to the ubiquitin-conjugating enzyme family. UFC1 subfamily.

Functionally, E2-like enzyme which forms an intermediate with UFM1 via a thioester linkage. The sequence is that of Ubiquitin-fold modifier-conjugating enzyme 1 from Drosophila willistoni (Fruit fly).